Consider the following 81-residue polypeptide: Putative membrane protein insertion efficiency factor (81 aa).

Positions Trp60–Glu81 are disordered. Residues Thr70–Glu81 are compositionally biased toward polar residues.

This sequence belongs to the UPF0161 family.

The protein localises to the cell inner membrane. In terms of biological role, could be involved in insertion of integral membrane proteins into the membrane. The chain is Putative membrane protein insertion efficiency factor from Stutzerimonas stutzeri (strain A1501) (Pseudomonas stutzeri).